A 379-amino-acid polypeptide reads, in one-letter code: Pectin lyase B (379 aa).

Positions 1–19 (MRLHAPILSLLAAAASTSA) are cleaved as a signal peptide. 2 disulfide bridges follow: Cys82-Cys101 and Cys91-Cys225. An N-linked (GlcNAc...) asparagine glycan is attached at Asn128. The active site involves Arg255. A disulfide bridge links Cys322 with Cys330.

This sequence belongs to the polysaccharide lyase 1 family.

The protein resides in the secreted. The catalysed reaction is Eliminative cleavage of (1-&gt;4)-alpha-D-galacturonan methyl ester to give oligosaccharides with 4-deoxy-6-O-methyl-alpha-D-galact-4-enuronosyl groups at their non-reducing ends.. In terms of biological role, pectinolytic enzymes consist of four classes of enzymes: pectin lyase, polygalacturonase, pectin methylesterase and rhamnogalacturonase. Among pectinolytic enzymes, pectin lyase is the most important in depolymerization of pectin, since it cleaves internal glycosidic bonds of highly methylated pectins. This chain is Pectin lyase B (pelB), found in Emericella nidulans (strain FGSC A4 / ATCC 38163 / CBS 112.46 / NRRL 194 / M139) (Aspergillus nidulans).